The following is a 628-amino-acid chain: Leucine-rich repeat and fibronectin type-III domain-containing protein 3 (628 aa).

Residues 1–16 form the signal peptide; that stretch reads MAVLPLLLCLLPLAPA. At 17 to 540 the chain is on the extracellular side; that stretch reads SSPPQPASPS…APHAPFLGGT (524 aa). Positions 19 to 59 constitute an LRRNT domain; that stretch reads PPQPASPSPCPRRCRCQTQSLPLSVLCPGAGLLFVPPSLDR. 7 LRR repeats span residues 60 to 83, 84 to 105, 108 to 129, 132 to 153, 157 to 178, 181 to 202, and 205 to 226; these read RAAELRLADNFIATVRRRDLANMT, GLLHLSLSRNTIRHVAAGAFSD, ALRALHLDGNRLTSLGEGQLRG, NLRHLILSNNQLAALAAGALDD, TLEDLDLSYNNLEQLPWEALGR, NVNTLGLDHNLLASVPAGAFSR, and KLARLDMTSNRLTTIPPDPLFS. One can recognise an LRRCT domain in the interval 249–295; that stretch reads NPLHCNCELVWLRRLAREDDLEACASPPALGGRYFWAVGEEEFVCEP. Residues 295–382 enclose the Ig-like domain; sequence PPVVTHRSPP…GEATAAVELT (88 aa). The cysteines at positions 317 and 366 are disulfide-linked. 2 N-linked (GlcNAc...) asparagine glycosylation sites follow: Asn348 and Asn393. Residues 380-433 form a disordered region; the sequence is ELTVGPPPPPQLANSTSCDPPRDGEPDALTPPSAASASASAKAAEAGPPTDRGV. Residues 410-428 are compositionally biased toward low complexity; sequence PPSAASASASAKAAEAGPP. One can recognise a Fibronectin type-III domain in the interval 427–525; that stretch reads PPTDRGVQVT…GCNRFSTEPA (99 aa). The chain crosses the membrane as a helical span at residues 541–561; sequence MIIALGGVIVASVLVFIFVLL. At 562–628 the chain is on the cytoplasmic side; the sequence is MRYKVHGGQP…WGPSHEPMGP (67 aa). Residues 570–609 are disordered; sequence QPPGKTKASAPVSSVCSQTNGALGPMPAPPAPEPSAPRAH. Polar residues predominate over residues 580-590; it reads PVSSVCSQTNG. The segment covering 595 to 604 has biased composition (pro residues); that stretch reads MPAPPAPEPS.

It belongs to the LRFN family. In terms of assembly, can form heteromeric complexes with LRFN1, LRFN2, LRFN4 and LRFN5. Able to form homomeric complexes across cell junctions, between adjacent cells. Does not interact with DLG4. In terms of processing, N-glycosylated.

The protein localises to the cell membrane. The protein resides in the cell projection. It localises to the axon. Its subcellular location is the dendrite. It is found in the synapse. The protein localises to the presynaptic cell membrane. The protein resides in the postsynaptic cell membrane. Functionally, cell adhesion molecule that mediates homophilic cell-cell adhesion in a Ca(2+)-independent manner. Promotes neurite outgrowth in hippocampal neurons. This chain is Leucine-rich repeat and fibronectin type-III domain-containing protein 3 (LRFN3), found in Bos taurus (Bovine).